Here is a 47-residue protein sequence, read N- to C-terminus: High light-inducible protein HliC (47 aa).

Topologically, residues 1-14 are cytoplasmic; sequence MNNENSKFGFTAFA. The Chlorophyll-binding motif signature appears at 15 to 20; it reads ENWNGR. Over 15-36 the chain traverses the membrane; sequence ENWNGRLAMIGFSSALILELVS. The Lumenal, thylakoid portion of the chain corresponds to 37 to 47; the sequence is GQGVLHFFGIL.

Belongs to the Hlip family. In terms of assembly, forms heterodimers with both HliA and HliB; these are associated with photosystem II (PSII) assembly intermediates containing CP47 (psbB). In the absence of CP47 (psbB) and HliD, forms a homooligomer in vivo that binds 2 chlorophyll a and 1 beta-carotenoid per monomer. Cofractionates in an approximately 50 kDa fraction the thylakoid membrane with HliD. Associated in vivo with monomeric PSII. Purified in several chlorophyll- and carotenoid-containing complexes, including photosystem II (PSII) assembly intermediate complex RCII* (iD1, D1, D2, PsbE, PsbF, PsbI, Ycf39, Ycf48, HliC and HliD) and the Ycf39-Hlip complex (Ycf39, HliC, HliD and pigments).

It is found in the cellular thylakoid membrane. Its function is as follows. Forms a number of heteromers involved in photosystem II (PSII) assembly and/or repair under high light stress. Required for binding of chlorophyll and carotenoids by the Ycf39-Hlip complex. The Ycf39-Hlip complex binds D1 at an early stage of PSII assembly along with Ycf48, ribosomes and ChlG, the last enzyme in chlorophyll biosynthesis; it may be involved in chlorophyll reuse and delivery to D1 in the initial stages of PSII assembly. HliA-HliC and HliB-HliC heterodimers bind chlorophyll and carotenoids in a 1:0.6 ratio. Complexes bind mostly beta-carotenoid, but minor amounts of echinenone and beta-crytoxanthin are also detected. The complexes efficiently quench chlorophyll fluorescence, contributing to photoprotection. Deletion of 4 to 5 members of the Hlip family suggests the proteins are involved in regulation of chlorophyll biosynthesis, in stabilization of chlorophyll-binding proteins and/or in reuse of chlorophylls, and may regulate tetrapyrrole biosynthesis. Might bind chlorophyll and/or carotenoids in association with HliD (called the ScpBE pair). In terms of biological role, the Hlips might regulate tetrapyrrole biosynthesis, maybe at the level of aminolevulinic acid synthesis and probably stabilize PSII assembly intermediates. This Synechocystis sp. (strain ATCC 27184 / PCC 6803 / Kazusa) protein is High light-inducible protein HliC (hliC).